Here is a 366-residue protein sequence, read N- to C-terminus: Ferrochelatase (366 aa).

2 residues coordinate Fe cation: H210 and E293.

This sequence belongs to the ferrochelatase family.

The protein localises to the cytoplasm. It carries out the reaction heme b + 2 H(+) = protoporphyrin IX + Fe(2+). Its pathway is porphyrin-containing compound metabolism; protoheme biosynthesis; protoheme from protoporphyrin-IX: step 1/1. Catalyzes the ferrous insertion into protoporphyrin IX. The protein is Ferrochelatase of Leptospira borgpetersenii serovar Hardjo-bovis (strain L550).